Consider the following 471-residue polypeptide: Proline--tRNA ligase (471 aa).

It belongs to the class-II aminoacyl-tRNA synthetase family. ProS type 3 subfamily. In terms of assembly, homodimer.

Its subcellular location is the cytoplasm. The enzyme catalyses tRNA(Pro) + L-proline + ATP = L-prolyl-tRNA(Pro) + AMP + diphosphate. Its function is as follows. Catalyzes the attachment of proline to tRNA(Pro) in a two-step reaction: proline is first activated by ATP to form Pro-AMP and then transferred to the acceptor end of tRNA(Pro). This chain is Proline--tRNA ligase, found in Archaeoglobus fulgidus (strain ATCC 49558 / DSM 4304 / JCM 9628 / NBRC 100126 / VC-16).